Here is a 242-residue protein sequence, read N- to C-terminus: uncharacterized protein (242 aa).

The N-terminal stretch at 1-20 (MTFIKGLPLMLLTISLGCNA) is a signal peptide.

Belongs to the periplasmic pilus chaperone family.

The protein localises to the periplasm. In terms of biological role, could be required for the biogenesis of the putative YbgD fimbria. This is an uncharacterized protein from Escherichia coli (strain K12).